The following is a 756-amino-acid chain: Transient receptor potential cation channel subfamily V member 2 (756 aa).

Residues methionine 1–asparagine 45 are disordered. Positions methionine 1–isoleucine 385 are required for interaction with SLC50A1. Residues methionine 1 to arginine 387 lie on the Cytoplasmic side of the membrane. Residues serine 15 and serine 77 each carry the phosphoserine modification. ANK repeat units follow at residues asparagine 68–serine 110, threonine 111–tyrosine 157, arginine 158–tyrosine 203, phenylalanine 204–serine 239, leucine 240–histidine 288, and glutamine 289–serine 315. A helical transmembrane segment spans residues phenylalanine 388–histidine 408. Residues glutamine 409–methionine 428 are Extracellular-facing. Residues leucine 429–tryptophan 449 traverse the membrane as a helical segment. Residues tyrosine 450 to arginine 455 lie on the Cytoplasmic side of the membrane. Residues leucine 456–leucine 476 form a helical membrane-spanning segment. Residues leucine 477–glutamate 490 lie on the Extracellular side of the membrane. A helical transmembrane segment spans residues tryptophan 491–threonine 511. Topologically, residues arginine 512–leucine 532 are cytoplasmic. Residues leucine 533–leucine 553 traverse the membrane as a helical segment. A disordered region spans residues serine 559 to valine 583. An N-linked (GlcNAc...) asparagine glycan is attached at asparagine 567. The pore-forming intramembrane region spans threonine 568–glutamate 604. A helical transmembrane segment spans residues valine 617–isoleucine 637. Topologically, residues alanine 638–histidine 756 are cytoplasmic. The disordered stretch occupies residues glutamate 719–histidine 756. Residues asparagine 732–serine 741 show a composition bias toward polar residues. Serine 743 and serine 755 each carry phosphoserine.

This sequence belongs to the transient receptor (TC 1.A.4) family. TrpV subfamily. TRPV2 sub-subfamily. In terms of assembly, homotetramer. Interacts with a cAMP-dependent protein kinase type II regulatory subunit (PRKAR2A or PRKAR2B) and ACBD3. Interacts with SLC50A1; the interaction probably occurs intracellularly and depends on TRPV2 N-glycosylation. In terms of processing, N-glycosylated. Post-translationally, phosphorylated by PKA. Abundantly expressed in spleen, placenta, skeleton muscle, lung and brain.

It localises to the cell membrane. Its subcellular location is the cytoplasm. The protein resides in the melanosome. It carries out the reaction Ca(2+)(in) = Ca(2+)(out). The catalysed reaction is Mg(2+)(in) = Mg(2+)(out). The enzyme catalyses Na(+)(in) = Na(+)(out). It catalyses the reaction K(+)(in) = K(+)(out). Functionally, calcium-permeable, non-selective cation channel with an outward rectification. Seems to be regulated, at least in part, by IGF1, PDGF and neuropeptide head activator. May transduce physical stimuli in mast cells. Activated by temperatures higher than 52 degrees Celsius; is not activated by vanilloids and acidic pH. This chain is Transient receptor potential cation channel subfamily V member 2 (Trpv2), found in Mus musculus (Mouse).